Reading from the N-terminus, the 78-residue chain is Large ribosomal subunit protein bL28 (78 aa).

The protein belongs to the bacterial ribosomal protein bL28 family.

This chain is Large ribosomal subunit protein bL28, found in Synechococcus sp. (strain JA-2-3B'a(2-13)) (Cyanobacteria bacterium Yellowstone B-Prime).